Here is a 254-residue protein sequence, read N- to C-terminus: MYEKYIVEGLSDREIAYLIGCGKATVVRARQKHGIYREDVKMCDDYTLDNISEDLRTFIDGLLLGDACITEKGNLLITQNKRYDWLEYVKHRFQQFGLNVYFHCYKYKRRTSEVIADLYVLSTSRYELFRQLRERWYPDGIKRIPNDLVINDEGLAQWYLGDGSLTKQKNGYKLELSTHGFTLDENKFLQQKLKLLYGFDFRISKKHQYRYLRLFKSKQVHAFCSIVEPFIPPSYRNKVRCLHDYQWLKSWDVI.

This is an uncharacterized protein from Methanocaldococcus jannaschii (strain ATCC 43067 / DSM 2661 / JAL-1 / JCM 10045 / NBRC 100440) (Methanococcus jannaschii).